Consider the following 269-residue polypeptide: Subtilisin BL (269 aa).

Ca(2+) is bound at residue Q2. The 264-residue stretch at P5–T268 folds into the Peptidase S8 domain. D32 serves as the catalytic Charge relay system. Ca(2+) is bound at residue D40. Catalysis depends on H62, which acts as the Charge relay system. 7 residues coordinate Ca(2+): L73, N75, I77, V79, A163, Y165, and A168. S215 serves as the catalytic Charge relay system.

The protein belongs to the peptidase S8 family. The cofactor is Ca(2+).

It localises to the secreted. It catalyses the reaction Hydrolysis of proteins with broad specificity for peptide bonds, and a preference for a large uncharged residue in P1. Hydrolyzes peptide amides.. Its function is as follows. Subtilisin is an extracellular alkaline serine protease, it catalyzes the hydrolysis of proteins and peptide amides. The chain is Subtilisin BL from Lederbergia lenta (Bacillus lentus).